Consider the following 149-residue polypeptide: Alpha-crystallin A chain (149 aa).

The sHSP domain occupies Leu41–Pro149. His89, Glu91, and His96 together coordinate Zn(2+).

It belongs to the small heat shock protein (HSP20) family. In terms of assembly, heteropolymer composed of three CRYAA and one CRYAB subunits. Inter-subunit bridging via zinc ions enhances stability, which is crucial as there is no protein turn over in the lens. Zinc coordination is achieved at least by His-89, Glu-91 and His-96. His-83 and Glu-85 come from the same molecule within the oligomer, while His-90 residue is provided by another molecule. Can also form homodimers and homotetramers (dimers of dimers) which serve as the building blocks of homooligomers.

It localises to the cytoplasm. It is found in the nucleus. Functionally, contributes to the transparency and refractive index of the lens. May act as a chaperone, preventing aggregation of various proteins under a wide range of stress conditions. This is Alpha-crystallin A chain (CRYAA) from Trachemys scripta elegans (Red-eared slider turtle).